A 603-amino-acid chain; its full sequence is Alpha-1,2-mannosyltransferase algn-9 (603 aa).

The tract at residues 1–25 (MVTHRRKGGSGPPQKPPPRIVDRSS) is disordered. Residues 1 to 108 (MVTHRRKGGS…EYSPVYAIRS (108 aa)) lie on the Lumenal side of the membrane. Residues 109–129 (YFYIYLHYIPASLFANLFGDT) traverse the membrane as a helical segment. Position 130 (Lys-130) is a topological domain, cytoplasmic. The helical transmembrane segment at 131-151 (IVVFTLIRLTIGLFCLLGEYY) threads the bilayer. Residues 152–166 (AFDAICKKINIATGR) lie on the Lumenal side of the membrane. The helical transmembrane segment at 167 to 187 (FFILFSIFSSGMFLASTAFVP) threads the bilayer. Over 188–195 (SSFCMAIT) the chain is Cytoplasmic. A helical membrane pass occupies residues 196-216 (FYILGAYLNENWTAGIFCVAF). Over 217–218 (ST) the chain is Lumenal. The helical transmembrane segment at 219–239 (MVGWPFSAVLGLPIVADMLLL) threads the bilayer. Over 240–245 (KGLRIR) the chain is Cytoplasmic. Residues 246–266 (FILTSLVIGLCIGGVQVITDS) traverse the membrane as a helical segment. Topologically, residues 267-310 (HYFGKTVLAPLNIFLYNVVSGPGPSLYGEEPLSFYIKNLFNNWN) are lumenal. The chain crosses the membrane as a helical span at residues 311-331 (IVIFAAPFGFPLSLAYFTKVW). Residues 332–343 (MSQDRNVALYQR) lie on the Cytoplasmic side of the membrane. Residues 344-364 (FAPIILLAVTTAAWLLIFGSQ) traverse the membrane as a helical segment. The Lumenal portion of the chain corresponds to 365–370 (AHKEER). Residues 371 to 391 (FLFPIYPFIAFFAALALDATN) traverse the membrane as a helical segment. At 392-397 (RLCLKK) the chain is on the cytoplasmic side. The chain crosses the membrane as a helical span at residues 398-418 (LGMDNILSILFILCFAILSAS). Over 419-603 (RTYSIHNNYG…TCTLYRKSNL (185 aa)) the chain is Lumenal. Asn-443 carries N-linked (GlcNAc...) asparagine glycosylation.

Belongs to the glycosyltransferase 22 family.

It localises to the endoplasmic reticulum membrane. The enzyme catalyses an alpha-D-Man-(1-&gt;2)-alpha-D-Man-(1-&gt;2)-alpha-D-Man-(1-&gt;3)-[alpha-D-Man-(1-&gt;3)-alpha-D-Man-(1-&gt;6)]-beta-D-Man-(1-&gt;4)-beta-D-GlcNAc-(1-&gt;4)-alpha-D-GlcNAc-diphospho-di-trans,poly-cis-dolichol + a di-trans,poly-cis-dolichyl beta-D-mannosyl phosphate = an alpha-D-Man-(1-&gt;2)-alpha-D-Man-(1-&gt;2)-alpha-D-Man-(1-&gt;3)-[alpha-D-Man-(1-&gt;2)-alpha-D-Man-(1-&gt;3)-alpha-D-Man-(1-&gt;6)]-beta-D-Man-(1-&gt;4)-beta-D-GlcNAc-(1-&gt;4)-alpha-D-GlcNAc-diphospho-di-trans,poly-cis-dolichol + a di-trans,poly-cis-dolichyl phosphate + H(+). The catalysed reaction is an alpha-D-Man-(1-&gt;2)-alpha-D-Man-(1-&gt;2)-alpha-D-Man-(1-&gt;3)-[alpha-D-Man-(1-&gt;2)-alpha-D-Man-(1-&gt;3)-[alpha-D-Man-(1-&gt;6)]-alpha-D-Man-(1-&gt;6)]-beta-D-Man-(1-&gt;4)-beta-D-GlcNAc-(1-&gt;4)-alpha-D-GlcNAc-diphospho-di-trans,poly-cis-dolichol + a di-trans,poly-cis-dolichyl beta-D-mannosyl phosphate = an alpha-D-Man-(1-&gt;2)-alpha-D-Man-(1-&gt;2)-alpha-D-Man-(1-&gt;3)-[alpha-D-Man-(1-&gt;2)-alpha-D-Man-(1-&gt;3)-[alpha-D-Man-(1-&gt;2)-alpha-D-Man-(1-&gt;6)]-alpha-D-Man-(1-&gt;6)]-beta-D-Man-(1-&gt;4)-beta-D-GlcNAc-(1-&gt;4)-alpha-D-GlcNAc-diphospho-di-trans,poly-cis-dolichol + a di-trans,poly-cis-dolichyl phosphate + H(+). The protein operates within protein modification; protein glycosylation. Functionally, catalyzes the transfer of mannose from Dol-P-Man to lipid-linked oligosaccharides. The chain is Alpha-1,2-mannosyltransferase algn-9 from Caenorhabditis elegans.